We begin with the raw amino-acid sequence, 318 residues long: uncharacterized protein (318 aa).

The span at 1-22 (MKASQERSEARRTAHSVKEKKY) shows a compositional bias: basic and acidic residues. Disordered regions lie at residues 1-29 (MKAS…ASPR) and 293-318 (DDGD…DDDE).

This is an uncharacterized protein from Ictalurid herpesvirus 1 (strain Auburn) (IcHV-1).